The sequence spans 319 residues: MISRHLQNNLMSVDPVSSQAMELSDVTLIEGVGNEVMVVAGVVVLTLALVLAWLSTYVADSSNSQLLGTIVSAGDTSVLHLGHVDQLVNQGTPEPTEHPHPSGGSDDKAEETSDSGGDTTGEPGARGDMEPSLEHLLDIQGLPKRQAGLESSRPEASLGLDDSTCLSPSPSLINVRLKFLNDTEELAVARPEDTVGTLKSKYFPGQESQMKLIYQGRLLQDPARTLSSLNITNNCVIHCHRSPPGAAVSGPSTSLTPTTEQSSLGVNVGSLMVPVFVVLLGVVWYFRINYRQFFTAPATVSLVGVTVFFSFLVFGMYGR.

A helical membrane pass occupies residues 36 to 56 (VMVVAGVVVLTLALVLAWLST). Disordered regions lie at residues 88–130 (VNQG…GDME) and 146–165 (QAGLESSRPEASLGLDDSTC). A compositionally biased stretch (basic and acidic residues) spans 95–111 (PTEHPHPSGGSDDKAEE). In terms of domain architecture, Ubiquitin-like spans 173-246 (INVRLKFLND…IHCHRSPPGA (74 aa)). A run of 2 helical transmembrane segments spans residues 264 to 284 (LGVNVGSLMVPVFVVLLGVVW) and 293 to 313 (FFTAPATVSLVGVTVFFSFLV).

Its subcellular location is the membrane. The polypeptide is Transmembrane and ubiquitin-like domain-containing protein 2 (Tmub2) (Rattus norvegicus (Rat)).